A 209-amino-acid chain; its full sequence is Prolactin (209 aa).

Residues 1-24 (MAQRFKGRSLFLTALLCLASQGYA) form the signal peptide. Cystine bridges form between C70-C184 and C201-C209.

Belongs to the somatotropin/prolactin family.

The protein localises to the secreted. The protein is Prolactin (prl) of Anguilla anguilla (European freshwater eel).